Reading from the N-terminus, the 607-residue chain is Fatty acid amide hydrolase (607 aa).

Active-site charge relay system residues include lysine 204 and serine 280. 301 to 304 provides a ligand contact to substrate; it reads GGGS. The active-site Acyl-ester intermediate is the serine 304.

The protein belongs to the amidase family. In terms of assembly, forms homodimers.

Its subcellular location is the endoplasmic reticulum membrane. The protein localises to the cell membrane. The catalysed reaction is N-(9Z,12Z-octadecadienoyl)-ethanolamine + H2O = ethanolamine + (9Z,12Z)-octadecadienoate. Functionally, catalyzes the hydrolysis of bioactive endogenous fatty acid amides to their corresponding acids. The hydrolysis of endogenous amidated lipids terminates their participation as lipid mediators in various signaling systems. Converts a wide range of N-acylethanolamines (NAEs) to their corresponding free fatty acids and ethanolamine. This is Fatty acid amide hydrolase from Medicago truncatula (Barrel medic).